Reading from the N-terminus, the 221-residue chain is uncharacterized protein (221 aa).

The signal sequence occupies residues 1–30 (MAKFNNNILLIILIIVILFIIFYFLNKNNQ).

It is found in the virion. This is an uncharacterized protein from Acanthamoeba polyphaga mimivirus (APMV).